An 843-amino-acid chain; its full sequence is Protein piwi (843 aa).

A Nuclear localization signal motif is present at residues 1 to 12 (MADDQGRGRRRP). The interval 1-76 (MADDQGRGRR…TERKPWGDQY (76 aa)) is disordered. The tract at residues 1-257 (MADDQGRGRR…ILLGTEITHK (257 aa)) is interaction with CBX5 and papi. Arginine 7, arginine 9, arginine 10, and arginine 11 each carry symmetric dimethylarginine. Basic and acidic residues predominate over residues 41 to 72 (PRADPRIEASRERRALEEAPRREGGPTERKPW). A PAZ domain is found at 263-372 (TIYDIMRRCS…LIPELCRVTG (110 aa)). One can recognise a Piwi domain in the interval 538-829 (LILCLVPNDN…LATLVGTNLH (292 aa)). Glutamine 589 lines the Mg(2+) pocket. Residues aspartate 614 and aspartate 685 contribute to the active site. Leucine 843 contacts Mg(2+).

This sequence belongs to the argonaute family. Piwi subfamily. As to quaternary structure, in the ovaries, part of a complex composed of at least Panx, nxf2, piwi and Nxt1. The complex is knowns as Panx-induced co-transcriptional silencing (PICTS) complex, Panx-nxf2-dependent TAP/p15 silencing (Pandas complex), SFiNX (silencing factor interacting nuclear export variant) or piwi-Panx-nxf2-p15 (PPNP) complex. Interacts with vas; this interaction is RNA-independent. Interacts with Dcr-1 and Fmr1; these interactions occur in polar granules. Interacts (via N-terminal region) with CBX5 (via chromoshadow domain). Forms a complex with Hsp83 and Hop; probably Hop mediates the interaction between piwi and Hsp83. Forms a complex with Yb body components armi and fs(1)Yb; this interaction is required for proper piRNA loading and nuclear localization of piwi. Interaction of Piwi and fs(1)Yb is likely to occur via armi. Interacts (via the N-terminal region when unmethylated or symmetrically methylated at Arg-10) with papi (via Tudor domain). Interacts with vret. Interacts with Panx. Interacts with arx. Interacts with Tudor-SN. Interacts with Nup358 (via N-terminus). Associates with the nuclear pore complex via interaction with Elys. Interacts with thoc5; the interaction might be partly RNA-mediated. Interacts with xmas-2. In terms of processing, symmetrically dimethylated, most likely by csul. Methylation at Arg-10 enhances binding to papi whereas methylation at Arg-7, Arg-9 or Arg-11 reduces binding affinity to papi. Post-translationally, phosphorylated on serine and tyrosine residues in an Hsp83-dependent manner. Expressed in ovaries (at protein level). Expressed somatically in ovariole terminal filament cells, epithelial sheath cells, cap cells and follicle cells (at protein level). Expressed in nurse cells and oocytes in developing egg chambers (at protein level). In embryos, accumulates in pole cells (at protein level). In larval and adult testis, expressed in a germinal proliferative center at the apical tip containing somatic hub cells and mitotically dividing germ stem cells (at protein level).

Its subcellular location is the cytoplasm. The protein resides in the nucleus. It localises to the nucleoplasm. It is found in the chromosome. Functionally, acts via the piwi-interacting RNA (piRNA) metabolic process, which mediates the repression of transposable elements during meiosis by forming complexes composed of piRNAs and Piwi proteins and governs the methylation and subsequent repression of transposons. Directly binds piRNAs, a class of 24 to 30 nucleotide RNAs that are generated by a Dicer-independent mechanism and are primarily derived from transposons and other repeated sequence elements. In ovarian somatic cells, mediates silencing of transposable elements at the transcriptional level in a mael-dependent manner. Involved in silencing of long terminal repeat (LTR) retrotransposons in male germline. In testis, regulates spermatogenesis together with Tudor-SN. In germ cells, mediates silencing at both transcriptional and post-transcriptional levels and is involved in the maintenance of populations of primary and secondary piRNAs. Piwi-mediated transcriptional silencing is accompanied by the formation of His3 trimethylated on 'Lys-10' (H3K9me3) associated euchromatin and heterochromatin. In ovary, associates predominantly with antisense piRNAs that contain uridine at their 5' end. Association with sense piRNAs is also observed but to a lesser extent. Mediates a somatic signaling mechanism required for the maintenance of germline stem cells to produce and maintain a daughter germline stem cell. It is not essential for the further differentiation of the committed daughter cell. Acts cell autonomously to promote germline stem cell division. Its role in stem cell maintenance does not seem to require nuclear localization. Required maternally for the posterior localization of osk and vas and for pole cell formation during oogenesis and early embryogenesis. Together with Hop and Hsp83, mediates canalization, also known as developmental robustness, likely via epigenetic silencing of existing genetic variants and suppression of transposon-induced new genetic variation. Shows RNA cleavage activity, although is not required for any of its known functions. In the ovaries, forms a complex with nxf2, Panx and Nxt1 which acts as effectors of cotranscriptional transposon silencing. This Drosophila melanogaster (Fruit fly) protein is Protein piwi.